An 89-amino-acid polypeptide reads, in one-letter code: uncharacterized protein (89 aa).

A run of 3 helical transmembrane segments spans residues 5-27, 32-51, and 63-85; these read TLTEYCLLIFFTGFYLAVTGFTA, LYIGIALIYIFSHIFSKRLL, and LFFSVLAIIGSVFITVLCIALVA.

Its subcellular location is the cell membrane. This is an uncharacterized protein from Bacillus subtilis (strain 168).